Here is a 198-residue protein sequence, read N- to C-terminus: Ribonuclease HII (198 aa).

The RNase H type-2 domain occupies 10-198; sequence QLVAGVDEVG…PVKRALGLAS (189 aa). The a divalent metal cation site is built by Asp16, Glu17, and Asp108.

The protein belongs to the RNase HII family. The cofactor is Mn(2+). It depends on Mg(2+) as a cofactor.

The protein resides in the cytoplasm. The catalysed reaction is Endonucleolytic cleavage to 5'-phosphomonoester.. Endonuclease that specifically degrades the RNA of RNA-DNA hybrids. In Citrobacter koseri (strain ATCC BAA-895 / CDC 4225-83 / SGSC4696), this protein is Ribonuclease HII.